Here is a 597-residue protein sequence, read N- to C-terminus: Inactive metallocarboxypeptidase ECM14 (597 aa).

The first 21 residues, 1–21, serve as a signal peptide directing secretion; the sequence is MRLFTHGQVLALLAFVNTISA. Residues 22–174 constitute a propeptide that is removed on maturation; the sequence is TPSFSTNSYP…QTIYESYPSP (153 aa). Positions 170 to 179 are enriched in low complexity; it reads SYPSPSQSPS. The segment at 170–189 is disordered; that stretch reads SYPSPSQSPSGRERGFLPSG. In terms of domain architecture, Peptidase M14 spans 202 to 522; sequence NYQPLSVIVP…NAVMMLGRFL (321 aa). Zn(2+)-binding residues include H264 and E267. Substrate contacts are provided by residues 264-267, R322, and 339-340; these read HARE and DR. C333 and C356 form a disulfide bridge. N-linked (GlcNAc...) asparagine glycosylation is present at N349. A Zn(2+)-binding site is contributed by H396. Residue 397–398 coordinates substrate; the sequence is SY. Residues 543–597 are disordered; that stretch reads KDDKPILNDDDDDDADTNDDGIGRKDDSWIPDEYKGDNDRDESDGGWAFRRLRKR. A compositionally biased stretch (acidic residues) spans 550–561; the sequence is NDDDDDDADTND. Over residues 563–580 the composition is skewed to basic and acidic residues; it reads GIGRKDDSWIPDEYKGDN.

This sequence belongs to the peptidase M14 family. It depends on Zn(2+) as a cofactor.

It is found in the vacuole. Its subcellular location is the secreted. Functionally, inactive carboxypeptidase that may play a role in cell wall organization and biogenesis. This is Inactive metallocarboxypeptidase ECM14 (ECM14) from Ajellomyces capsulatus (strain G186AR / H82 / ATCC MYA-2454 / RMSCC 2432) (Darling's disease fungus).